The chain runs to 440 residues: Chromosomal replication initiator protein DnaA (440 aa).

Positions 1-69 (MKERILQEIK…VKVVLGNDAT (69 aa)) are domain I, interacts with DnaA modulators. The segment at 69 to 96 (TFEITYEAFEPHSSYSEPLVKKRAVLLT) is domain II. The interval 97–313 (PLNPDYTFEN…GAIIKLLVYK (217 aa)) is domain III, AAA+ region. Residues Gly140, Gly142, Lys143, and Thr144 each contribute to the ATP site. A domain IV, binds dsDNA region spans residues 314–440 (ETTGKEVDLR…GEISKRALSG (127 aa)).

The protein belongs to the DnaA family. As to quaternary structure, oligomerizes as a right-handed, spiral filament on DNA at oriC.

It is found in the cytoplasm. In terms of biological role, plays an essential role in the initiation and regulation of chromosomal replication. ATP-DnaA binds to the origin of replication (oriC) to initiate formation of the DNA replication initiation complex once per cell cycle. Binds the DnaA box (a 9 base pair repeat at the origin) and separates the double-stranded (ds)DNA. Forms a right-handed helical filament on oriC DNA; dsDNA binds to the exterior of the filament while single-stranded (ss)DNA is stabiized in the filament's interior. The ATP-DnaA-oriC complex binds and stabilizes one strand of the AT-rich DNA unwinding element (DUE), permitting loading of DNA polymerase. After initiation quickly degrades to an ADP-DnaA complex that is not apt for DNA replication. Binds acidic phospholipids. This chain is Chromosomal replication initiator protein DnaA, found in Thermotoga petrophila (strain ATCC BAA-488 / DSM 13995 / JCM 10881 / RKU-1).